Consider the following 160-residue polypeptide: Nucleotide-binding protein CJA_2652 (160 aa).

The protein belongs to the YajQ family.

Nucleotide-binding protein. In Cellvibrio japonicus (strain Ueda107) (Pseudomonas fluorescens subsp. cellulosa), this protein is Nucleotide-binding protein CJA_2652.